The sequence spans 177 residues: Large ribosomal subunit protein uL6 (177 aa).

Belongs to the universal ribosomal protein uL6 family. As to quaternary structure, part of the 50S ribosomal subunit.

This protein binds to the 23S rRNA, and is important in its secondary structure. It is located near the subunit interface in the base of the L7/L12 stalk, and near the tRNA binding site of the peptidyltransferase center. In Rickettsia massiliae (strain Mtu5), this protein is Large ribosomal subunit protein uL6.